Here is a 395-residue protein sequence, read N- to C-terminus: Putative transcription factor 079L (395 aa).

The protein belongs to the IIV-6 282R family.

Functionally, transcription activation. This chain is Putative transcription factor 079L, found in Aedes vexans (Inland floodwater mosquito).